The chain runs to 131 residues: Sec-independent protein translocase protein TatB (131 aa).

The helical transmembrane segment at 2-22 (FDGIGFMELLLIGILGLVVLG) threads the bilayer. 2 stretches are compositionally biased toward polar residues: residues 68–83 (ESQG…QDSI) and 116–131 (AEKS…KPNG). The segment at 68 to 131 (ESQGLKNLSP…TGANSDKPNG (64 aa)) is disordered.

This sequence belongs to the TatB family. The Tat system comprises two distinct complexes: a TatABC complex, containing multiple copies of TatA, TatB and TatC subunits, and a separate TatA complex, containing only TatA subunits. Substrates initially bind to the TatABC complex, which probably triggers association of the separate TatA complex to form the active translocon.

It is found in the cell inner membrane. Its function is as follows. Part of the twin-arginine translocation (Tat) system that transports large folded proteins containing a characteristic twin-arginine motif in their signal peptide across membranes. Together with TatC, TatB is part of a receptor directly interacting with Tat signal peptides. TatB may form an oligomeric binding site that transiently accommodates folded Tat precursor proteins before their translocation. This chain is Sec-independent protein translocase protein TatB, found in Shewanella pealeana (strain ATCC 700345 / ANG-SQ1).